The primary structure comprises 290 residues: GTPase Era (290 aa).

Positions 2-144 constitute an Era-type G domain; that stretch reads KVLKVGVLGP…AIILEEFKPQ (143 aa). The G1 stretch occupies residues 10 to 17; that stretch reads GPTNAGKS. 10 to 17 contacts GTP; that stretch reads GPTNAGKS. The interval 36–40 is G2; sequence NTTLL. Residues 58–61 form a G3 region; that stretch reads DVPG. 58–62 serves as a coordination point for GTP; that stretch reads DVPGF. The tract at residues 97-100 is G4; it reads NKIE. Residues 121–123 are G5; it reads INK. 122-125 serves as a coordination point for GTP; that stretch reads NKFH. In terms of domain architecture, KH type-2 spans 201–279; sequence CKNEIPHIAR…FIDIFVKTEK (79 aa).

This sequence belongs to the TRAFAC class TrmE-Era-EngA-EngB-Septin-like GTPase superfamily. Era GTPase family. Monomer.

It is found in the cytoplasm. The protein resides in the cell membrane. Functionally, an essential GTPase that binds both GDP and GTP, with rapid nucleotide exchange. Plays a role in 16S rRNA processing and 30S ribosomal subunit biogenesis and possibly also in cell cycle regulation and energy metabolism. The chain is GTPase Era from Mycoplasma genitalium (strain ATCC 33530 / DSM 19775 / NCTC 10195 / G37) (Mycoplasmoides genitalium).